A 206-amino-acid polypeptide reads, in one-letter code: Ubiquitin-conjugating enzyme E2 S (206 aa).

Positions 14 to 160 (QTIRQVMKEL…ARMMTEIHAQ (147 aa)) constitute a UBC core domain. The Glycyl thioester intermediate role is filled by Cys98. Residues 165–191 (GVSDAKDDDGPSNKKHAGLDKKLQDKK) are disordered. Residues 168 to 191 (DAKDDDGPSNKKHAGLDKKLQDKK) are compositionally biased toward basic and acidic residues.

Belongs to the ubiquitin-conjugating enzyme family.

The enzyme catalyses S-ubiquitinyl-[E1 ubiquitin-activating enzyme]-L-cysteine + [E2 ubiquitin-conjugating enzyme]-L-cysteine = [E1 ubiquitin-activating enzyme]-L-cysteine + S-ubiquitinyl-[E2 ubiquitin-conjugating enzyme]-L-cysteine.. It participates in protein modification; protein ubiquitination. Its function is as follows. Catalyzes the covalent attachment of ubiquitin to other proteins. Acts as an essential factor of the anaphase promoting complex/cyclosome (APC/C), a cell cycle-regulated ubiquitin ligase that controls progression through mitosis. Acts by specifically elongating polyubiquitin chains initiated by the E2 enzyme vih/UbcH10 on APC/C substrates, enhancing the degradation of APC/C substrates by the proteasome and promoting mitotic exit. This Drosophila mojavensis (Fruit fly) protein is Ubiquitin-conjugating enzyme E2 S.